The sequence spans 377 residues: 4-hydroxy-3-methylbut-2-en-1-yl diphosphate synthase (flavodoxin) (377 aa).

Residues Cys-270, Cys-273, Cys-305, and Glu-312 each coordinate [4Fe-4S] cluster.

Belongs to the IspG family. Requires [4Fe-4S] cluster as cofactor.

It catalyses the reaction (2E)-4-hydroxy-3-methylbut-2-enyl diphosphate + oxidized [flavodoxin] + H2O + 2 H(+) = 2-C-methyl-D-erythritol 2,4-cyclic diphosphate + reduced [flavodoxin]. It participates in isoprenoid biosynthesis; isopentenyl diphosphate biosynthesis via DXP pathway; isopentenyl diphosphate from 1-deoxy-D-xylulose 5-phosphate: step 5/6. In terms of biological role, converts 2C-methyl-D-erythritol 2,4-cyclodiphosphate (ME-2,4cPP) into 1-hydroxy-2-methyl-2-(E)-butenyl 4-diphosphate. This is 4-hydroxy-3-methylbut-2-en-1-yl diphosphate synthase (flavodoxin) from Bacillus subtilis (strain 168).